A 206-amino-acid polypeptide reads, in one-letter code: Small ribosomal subunit protein uS4 (206 aa).

An S4 RNA-binding domain is found at serine 96–alanine 156.

It belongs to the universal ribosomal protein uS4 family. In terms of assembly, part of the 30S ribosomal subunit. Contacts protein S5. The interaction surface between S4 and S5 is involved in control of translational fidelity.

Its function is as follows. One of the primary rRNA binding proteins, it binds directly to 16S rRNA where it nucleates assembly of the body of the 30S subunit. In terms of biological role, with S5 and S12 plays an important role in translational accuracy. This chain is Small ribosomal subunit protein uS4, found in Hydrogenovibrio crunogenus (strain DSM 25203 / XCL-2) (Thiomicrospira crunogena).